The chain runs to 244 residues: Tubulin-folding cofactor B (244 aa).

Met-1 is subject to N-acetylmethionine. Position 65 is a phosphoserine; by PAK1 (Ser-65). Position 98 is a phosphotyrosine (Tyr-98). Ser-110 is modified (phosphoserine). Ser-128 carries the phosphoserine; by PAK1 modification. Residues 183–225 (GLTDFKPGYWVGVRYDEPLGKNDGSVNGKRYFECQAKYGAFVK) enclose the CAP-Gly domain. Position 219 is an N6-acetyllysine (Lys-219).

The protein belongs to the TBCB family. As to quaternary structure, supercomplex made of cofactors A to E. Cofactors A and D function by capturing and stabilizing tubulin in a quasi-native conformation. Cofactor E binds to the cofactor D-tubulin complex; interaction with cofactor C then causes the release of tubulin polypeptides that are committed to the native state. Cofactors B and E can form a heterodimer which binds to alpha-tubulin and enhances their ability to dissociate tubulin heterodimers. Interacts with GAN. Interacts with DCTN1. Post-translationally, phosphorylation by PAK1 is required for normal function. Ubiquitinated in the presence of GAN which targets it for degradation by the proteasome. Widely expressed with highest levels in brain. Broadly distributed throughout the neonate brain but restricted mainly to ependymary cells in the adult brain where it is concentrated in the cilia.

The protein localises to the cytoplasm. It is found in the cytoskeleton. Its function is as follows. Binds to alpha-tubulin folding intermediates after their interaction with cytosolic chaperonin in the pathway leading from newly synthesized tubulin to properly folded heterodimer. Involved in regulation of tubulin heterodimer dissociation. May function as a negative regulator of axonal growth. This is Tubulin-folding cofactor B (Tbcb) from Mus musculus (Mouse).